We begin with the raw amino-acid sequence, 141 residues long: U1 small nuclear ribonucleoprotein C (141 aa).

The Matrin-type zinc-finger motif lies at 4 to 36 (YYCEYCDKYLTHDSPSVRKSHTIGKVHQQAVTL). Residues 69–141 (LLPPNMVPGQ…SNSPPSNNDQ (73 aa)) form a disordered region. The span at 83–97 (MMPPGQFPFPPPPGQ) shows a compositional bias: pro residues. Low complexity-rich tracts occupy residues 100-110 (GGMPPHQQQPM) and 124-141 (QQSAQQFNSNSPPSNNDQ).

Belongs to the U1 small nuclear ribonucleoprotein C family. Component of the U1 snRNP. The U1 snRNP is composed of the U1 snRNA and the 7 core Sm proteins SNRPB, SNRPD1, SNRPD2, SNRPD3, SNRPE, SNRPF and SNRPG that assemble in a heptameric protein ring on the Sm site of the small nuclear RNA to form the core snRNP, and at least 3 U1 snRNP-specific proteins SNRNP70/U1-70K, SNRPA/U1-A and SNRPC/U1-C. SNRPC/U1-C interacts with U1 snRNA and the 5' splice-site region of the pre-mRNA.

Its subcellular location is the nucleus. In terms of biological role, component of the spliceosomal U1 snRNP, which is essential for recognition of the pre-mRNA 5' splice-site and the subsequent assembly of the spliceosome. SNRPC/U1-C is directly involved in initial 5' splice-site recognition for both constitutive and regulated alternative splicing. The interaction with the 5' splice-site seems to precede base-pairing between the pre-mRNA and the U1 snRNA. Stimulates commitment or early (E) complex formation by stabilizing the base pairing of the 5' end of the U1 snRNA and the 5' splice-site region. The polypeptide is U1 small nuclear ribonucleoprotein C (Heterostelium pallidum (strain ATCC 26659 / Pp 5 / PN500) (Cellular slime mold)).